A 350-amino-acid chain; its full sequence is S-adenosylmethionine:tRNA ribosyltransferase-isomerase (350 aa).

The protein belongs to the QueA family. Monomer.

The protein localises to the cytoplasm. The catalysed reaction is 7-aminomethyl-7-carbaguanosine(34) in tRNA + S-adenosyl-L-methionine = epoxyqueuosine(34) in tRNA + adenine + L-methionine + 2 H(+). It functions in the pathway tRNA modification; tRNA-queuosine biosynthesis. In terms of biological role, transfers and isomerizes the ribose moiety from AdoMet to the 7-aminomethyl group of 7-deazaguanine (preQ1-tRNA) to give epoxyqueuosine (oQ-tRNA). In Bacillus cytotoxicus (strain DSM 22905 / CIP 110041 / 391-98 / NVH 391-98), this protein is S-adenosylmethionine:tRNA ribosyltransferase-isomerase.